Here is a 75-residue protein sequence, read N- to C-terminus: Small ribosomal subunit protein bS16 (75 aa).

Belongs to the bacterial ribosomal protein bS16 family.

The chain is Small ribosomal subunit protein bS16 from Aliarcobacter butzleri (strain RM4018) (Arcobacter butzleri).